The primary structure comprises 165 residues: Phosphopantetheine adenylyltransferase (165 aa).

Thr9 contributes to the substrate binding site. Residues 9 to 10 (TF) and His17 contribute to the ATP site. 3 residues coordinate substrate: Lys41, Leu73, and Arg87. ATP contacts are provided by residues 88–90 (GLR), Glu98, and 123–129 (YQFISGT).

The protein belongs to the bacterial CoaD family. As to quaternary structure, homohexamer. Mg(2+) is required as a cofactor.

The protein resides in the cytoplasm. It carries out the reaction (R)-4'-phosphopantetheine + ATP + H(+) = 3'-dephospho-CoA + diphosphate. It participates in cofactor biosynthesis; coenzyme A biosynthesis; CoA from (R)-pantothenate: step 4/5. Functionally, reversibly transfers an adenylyl group from ATP to 4'-phosphopantetheine, yielding dephospho-CoA (dPCoA) and pyrophosphate. The protein is Phosphopantetheine adenylyltransferase of Burkholderia lata (strain ATCC 17760 / DSM 23089 / LMG 22485 / NCIMB 9086 / R18194 / 383).